The chain runs to 205 residues: MTKRAESKFKINRRLGVNLWGRAKSPLNKRDYAPGQHGQRRKGKPSDFGIQLMAKQKLKGYYGNISEKQFRKYYEEAVRRKGDTSENLIELLERRLDAVIYRMKFALTPFAARQFVNHGHVLVNGKRVNIPSYLVKVGDVVEVREKSKQLAMVLDATQSGERDVPEYLHVDHRLMKGTYARYPKLSDVPYPVQMEPNLVIEYYSR.

The interval 27 to 46 is disordered; that stretch reads LNKRDYAPGQHGQRRKGKPS. An S4 RNA-binding domain is found at 118–178; that stretch reads HGHVLVNGKR…HVDHRLMKGT (61 aa).

This sequence belongs to the universal ribosomal protein uS4 family. In terms of assembly, part of the 30S ribosomal subunit. Contacts protein S5. The interaction surface between S4 and S5 is involved in control of translational fidelity.

One of the primary rRNA binding proteins, it binds directly to 16S rRNA where it nucleates assembly of the body of the 30S subunit. Its function is as follows. With S5 and S12 plays an important role in translational accuracy. The protein is Small ribosomal subunit protein uS4 of Granulibacter bethesdensis (strain ATCC BAA-1260 / CGDNIH1).